The following is a 273-amino-acid chain: Ethanolamine ammonia-lyase small subunit (273 aa).

3 residues coordinate adenosylcob(III)alamin: valine 164, glutamate 185, and cysteine 214.

The protein belongs to the EutC family. As to quaternary structure, the basic unit is a heterodimer which dimerizes to form tetramers. The heterotetramers trimerize; 6 large subunits form a core ring with 6 small subunits projecting outwards. The cofactor is adenosylcob(III)alamin.

It localises to the bacterial microcompartment. It carries out the reaction ethanolamine = acetaldehyde + NH4(+). The protein operates within amine and polyamine degradation; ethanolamine degradation. In terms of biological role, catalyzes the deamination of various vicinal amino-alcohols to oxo compounds. Allows this organism to utilize ethanolamine as the sole source of nitrogen and carbon in the presence of external vitamin B12. The chain is Ethanolamine ammonia-lyase small subunit from Pseudomonas aeruginosa (strain UCBPP-PA14).